Here is a 360-residue protein sequence, read N- to C-terminus: MRVFNFSAGPAALPEEVLRQAADEMLDWHGSGMSVMEMSHRGKEFMSIHEAALADLRELLDVPASHRVLFLQGGGIAENAIVPMNLLGSRKTADFVVTGSWSQKSFNEAKKYCTPHLAATGKTDAGFTRAPAFAEWQLSDDPAYVHLCTNETIDGVETFEIPDLGDVPLVADVSSHILSRPMDVAKYGVLFGGAQKNIGMAGVTVVIVREDLLDRALSICPSAFEWKTVAANNSLYNTPPTYAIYIAGLVFQWLKRQGGLGAIEARNIEKAKLLYDTIDGSSFYLNKVEPAVRSRMNVPFFLADESRNEDFLAGAKARGLLQLKGHKSVGGMRASIYNAVPLEGVKALVEYMKDFEQRCA.

R41 lines the L-glutamate pocket. Positions 101, 152, 172, and 195 each coordinate pyridoxal 5'-phosphate. K196 is subject to N6-(pyridoxal phosphate)lysine. 237 to 238 provides a ligand contact to pyridoxal 5'-phosphate; that stretch reads NT.

This sequence belongs to the class-V pyridoxal-phosphate-dependent aminotransferase family. SerC subfamily. As to quaternary structure, homodimer. It depends on pyridoxal 5'-phosphate as a cofactor.

The protein resides in the cytoplasm. It carries out the reaction O-phospho-L-serine + 2-oxoglutarate = 3-phosphooxypyruvate + L-glutamate. It catalyses the reaction 4-(phosphooxy)-L-threonine + 2-oxoglutarate = (R)-3-hydroxy-2-oxo-4-phosphooxybutanoate + L-glutamate. Its pathway is amino-acid biosynthesis; L-serine biosynthesis; L-serine from 3-phospho-D-glycerate: step 2/3. It participates in cofactor biosynthesis; pyridoxine 5'-phosphate biosynthesis; pyridoxine 5'-phosphate from D-erythrose 4-phosphate: step 3/5. Functionally, catalyzes the reversible conversion of 3-phosphohydroxypyruvate to phosphoserine and of 3-hydroxy-2-oxo-4-phosphonooxybutanoate to phosphohydroxythreonine. The protein is Phosphoserine aminotransferase of Burkholderia multivorans (strain ATCC 17616 / 249).